The primary structure comprises 254 residues: Imidazole glycerol phosphate synthase subunit HisF (254 aa).

Residues Asp-12 and Asp-131 contribute to the active site.

The protein belongs to the HisA/HisF family. In terms of assembly, heterodimer of HisH and HisF.

The protein localises to the cytoplasm. It carries out the reaction 5-[(5-phospho-1-deoxy-D-ribulos-1-ylimino)methylamino]-1-(5-phospho-beta-D-ribosyl)imidazole-4-carboxamide + L-glutamine = D-erythro-1-(imidazol-4-yl)glycerol 3-phosphate + 5-amino-1-(5-phospho-beta-D-ribosyl)imidazole-4-carboxamide + L-glutamate + H(+). It functions in the pathway amino-acid biosynthesis; L-histidine biosynthesis; L-histidine from 5-phospho-alpha-D-ribose 1-diphosphate: step 5/9. Its function is as follows. IGPS catalyzes the conversion of PRFAR and glutamine to IGP, AICAR and glutamate. The HisF subunit catalyzes the cyclization activity that produces IGP and AICAR from PRFAR using the ammonia provided by the HisH subunit. The chain is Imidazole glycerol phosphate synthase subunit HisF from Corynebacterium aurimucosum (strain ATCC 700975 / DSM 44827 / CIP 107346 / CN-1) (Corynebacterium nigricans).